The chain runs to 89 residues: Probable Fe(2+)-trafficking protein (89 aa).

Belongs to the Fe(2+)-trafficking protein family.

Could be a mediator in iron transactions between iron acquisition and iron-requiring processes, such as synthesis and/or repair of Fe-S clusters in biosynthetic enzymes. The chain is Probable Fe(2+)-trafficking protein from Legionella pneumophila (strain Lens).